The following is a 74-amino-acid chain: MKSFYHYLMKYRHPKPKDEISHFANAAYEDHSFPKASTDYHELSVYLELNGDYLSSMTTFDEAFEQYDVEVKKK.

This sequence belongs to the UPF0346 family.

The sequence is that of UPF0346 protein BPUM_1890 from Bacillus pumilus (strain SAFR-032).